A 667-amino-acid polypeptide reads, in one-letter code: DNA ligase (667 aa).

NAD(+)-binding positions include Asp32–Asp36, Ser81–Leu82, and Glu110. The active-site N6-AMP-lysine intermediate is Lys112. 4 residues coordinate NAD(+): Arg133, Glu167, Lys283, and Lys307. Zn(2+)-binding residues include Cys401, Cys404, Cys419, and Cys424. The region spanning Glu586–Ser667 is the BRCT domain.

Belongs to the NAD-dependent DNA ligase family. LigA subfamily. It depends on Mg(2+) as a cofactor. The cofactor is Mn(2+).

It catalyses the reaction NAD(+) + (deoxyribonucleotide)n-3'-hydroxyl + 5'-phospho-(deoxyribonucleotide)m = (deoxyribonucleotide)n+m + AMP + beta-nicotinamide D-nucleotide.. In terms of biological role, DNA ligase that catalyzes the formation of phosphodiester linkages between 5'-phosphoryl and 3'-hydroxyl groups in double-stranded DNA using NAD as a coenzyme and as the energy source for the reaction. It is essential for DNA replication and repair of damaged DNA. This is DNA ligase from Staphylococcus aureus (strain bovine RF122 / ET3-1).